Reading from the N-terminus, the 336-residue chain is Biotin synthase (336 aa).

Residues Q54–R281 enclose the Radical SAM core domain. Residues C69, C73, and C76 each coordinate [4Fe-4S] cluster. The [2Fe-2S] cluster site is built by C113, C144, C204, and R276.

The protein belongs to the radical SAM superfamily. Biotin synthase family. As to quaternary structure, homodimer. [4Fe-4S] cluster is required as a cofactor. Requires [2Fe-2S] cluster as cofactor.

The catalysed reaction is (4R,5S)-dethiobiotin + (sulfur carrier)-SH + 2 reduced [2Fe-2S]-[ferredoxin] + 2 S-adenosyl-L-methionine = (sulfur carrier)-H + biotin + 2 5'-deoxyadenosine + 2 L-methionine + 2 oxidized [2Fe-2S]-[ferredoxin]. It functions in the pathway cofactor biosynthesis; biotin biosynthesis; biotin from 7,8-diaminononanoate: step 2/2. In terms of biological role, catalyzes the conversion of dethiobiotin (DTB) to biotin by the insertion of a sulfur atom into dethiobiotin via a radical-based mechanism. The protein is Biotin synthase of Actinobacillus pleuropneumoniae serotype 7 (strain AP76).